A 279-amino-acid polypeptide reads, in one-letter code: Calcium-binding protein 4 (279 aa).

Residues 1 to 12 are compositionally biased toward basic and acidic residues; that stretch reads MAEEQGRGRHGP. The interval 1 to 114 is disordered; the sequence is MAEEQGRGRH…PGPQHDAAQR (114 aa). A Phosphoserine modification is found at Ser-42. Residues 55 to 65 show a composition bias toward polar residues; that stretch reads GPSSSGEQTPM. EF-hand domains follow at residues 133–168, 187–204, 210–245, and 247–279; these read EELDELQAAFEEFDTDHDGYIGYRDLGECMRTLGYM, GRVDFEEFVEMMGPKLRE, LGLRELRIAFREFDRDRDGRITVAELREAAPALLGE, and LVGPELEEMLQEVDLNGDGTVDFNEFVMMLSRH. Asp-146, Asp-148, Asp-150, Tyr-152, and Asp-157 together coordinate Ca(2+). Ca(2+) contacts are provided by Asp-223, Asp-225, Asp-227, Arg-229, Glu-234, Asp-260, Asn-262, Asp-264, Thr-266, and Glu-271.

Interacts with CACNA1F and CACNA1D (via IQ domain) in a calcium independent manner. Interacts (via N-terminus) with UNC119. In terms of processing, phosphorylated. Phosphorylation levels change with the light conditions and regulate the activity. As to expression, expressed in the retina.

Its subcellular location is the cytoplasm. The protein localises to the presynapse. In terms of biological role, may play a role in normal synaptic function, probably through regulation of Ca(2+) influx and neurotransmitter release in photoreceptor synaptic terminals and in auditory transmission. Modulator of CACNA1F, shifting the activation range to more hyperpolarized voltages. The chain is Calcium-binding protein 4 (CABP4) from Bos taurus (Bovine).